The sequence spans 1074 residues: Phospholipase D1 (1074 aa).

Residues isoleucine 81–serine 212 enclose the PX domain. A PH domain is found at proline 219–glutamine 328. Residues cysteine 240 and cysteine 241 are each lipidated (S-palmitoyl cysteine). The 28-residue stretch at tyrosine 459–arginine 486 folds into the PLD phosphodiesterase 1 domain. The catalytic stretch occupies residues histidine 463–alanine 928. A phosphoserine mark is found at serine 499, serine 561, and serine 629. The region spanning glutamate 891–serine 918 is the PLD phosphodiesterase 2 domain.

This sequence belongs to the phospholipase D family. As to quaternary structure, interacts with PIP5K1B. In terms of tissue distribution, expressed abundantly in the pancreas and heart and at high levels in brain, placenta, spleen, uterus and small intestine.

The protein localises to the cytoplasm. The protein resides in the perinuclear region. It localises to the endoplasmic reticulum membrane. Its subcellular location is the golgi apparatus membrane. It is found in the late endosome membrane. It catalyses the reaction a 1,2-diacyl-sn-glycero-3-phosphocholine + H2O = a 1,2-diacyl-sn-glycero-3-phosphate + choline + H(+). It carries out the reaction ethanol + a 1,2-diacyl-sn-glycero-3-phosphocholine = 1,2-diacyl-sn-glycero-3-phosphoethanol + choline. The enzyme catalyses 1,2-dihexadecanoyl-sn-glycero-3-phosphocholine + H2O = 1,2-dihexadecanoyl-sn-glycero-3-phosphate + choline + H(+). Stimulated by phosphatidylinositol 4,5-bisphosphate and phosphatidylinositol 3,4,5-trisphosphate, activated by the phosphokinase C-alpha, by the ADP-ribosylation factor-1 (ARF-1), and to a lesser extent by GTP-binding proteins: RHO A, RAC-1 and CDC42. Inhibited by oleate. Functionally, function as phospholipase selective for phosphatidylcholine. Implicated as a critical step in numerous cellular pathways, including signal transduction, membrane trafficking, and the regulation of mitosis. May be involved in the regulation of perinuclear intravesicular membrane traffic. The sequence is that of Phospholipase D1 from Homo sapiens (Human).